Here is a 396-residue protein sequence, read N- to C-terminus: Ribosomal RNA large subunit methyltransferase I (396 aa).

Residues 2-81 (TVRLFLAKGR…EEINIEFFIR (80 aa)) enclose the PUA domain.

It belongs to the methyltransferase superfamily. RlmI family.

The protein localises to the cytoplasm. It carries out the reaction cytidine(1962) in 23S rRNA + S-adenosyl-L-methionine = 5-methylcytidine(1962) in 23S rRNA + S-adenosyl-L-homocysteine + H(+). Specifically methylates the cytosine at position 1962 (m5C1962) of 23S rRNA. The sequence is that of Ribosomal RNA large subunit methyltransferase I from Serratia proteamaculans (strain 568).